Reading from the N-terminus, the 440-residue chain is MPVKTPSPGDLEPIEKASQDELRALQLERLKWSVRHAYENVPHYRKAFDAKGVHPDDLKSLADLAKFPFTAKGDLRDNYPFGMFAVPREKVARVHASSGTTGKPTVVGYTLKDIDTWATVVARSIRASGGRAGDMVHIAYGYGLFTGGLGAHYGAEKLGCTVVPMSGGQTEKQIQLIQDFKPDIIMVTPSYMLTVLDEMERMGIDPHQTSLKVGIFGAEPWTQAMRAAMEARAGIDAVDIYGLSEVMGPGVANECIEAKDGPVIWEDHFYPEIIDPHTGEVLPDGSEGELVFTTLTKEAMPVIRYRTRDLTRLLPPTARSMRRMAKITGRSDDMLIIRGVNLFPTQVEELICKNPKLAPQYLLEVDKDGHMDTLTVKVEINPEANVGRHPEQKEALAKELQHDIKTFIGVSAKVHVCEPFAIERVTIGKAKRVVDRRPKE.

Belongs to the phenylacetyl-CoA ligase family. In terms of assembly, monomer.

The catalysed reaction is 2-phenylacetate + ATP + CoA = phenylacetyl-CoA + AMP + diphosphate. It functions in the pathway aromatic compound metabolism; phenylacetate degradation. Inhibition of activity is observed in the presence of a 1 mM of the divalent cations zinc, copper, and nickel. Functionally, catalyzes the activation of phenylacetic acid (PA) to phenylacetyl-CoA (PA-CoA). Involved in the phenylalanine metabolism. The protein is Phenylacetate-coenzyme A ligase (paaK) of Aromatoleum evansii (Azoarcus evansii).